Reading from the N-terminus, the 247-residue chain is TM2 domain-containing protein 3 (247 aa).

A signal peptide spans Met1–Gly29. Topologically, residues Gly30 to Asn179 are extracellular. Asn87, Asn122, Asn140, Asn157, Asn169, and Asn179 each carry an N-linked (GlcNAc...) asparagine glycan. A helical transmembrane segment spans residues Trp180–Gly200. Positions Gly183 to Val230 constitute a TM2 domain. Residues Ala201–Lys215 lie on the Cytoplasmic side of the membrane. A helical transmembrane segment spans residues Leu216–Gly236. Residues Tyr237 to Ile247 are Extracellular-facing.

The protein belongs to the TM2 family. In terms of tissue distribution, widely expressed.

Its subcellular location is the membrane. Probable positive regulator of Notch signaling. The polypeptide is TM2 domain-containing protein 3 (TM2D3) (Homo sapiens (Human)).